The chain runs to 353 residues: Photosystem II protein D1 (353 aa).

At T2 the chain carries N-acetylthreonine. A Phosphothreonine modification is found at T2. 3 helical membrane passes run 29 to 46 (YIGWFGVLMIPTLLTATS), 118 to 133 (HFLLGVACYMGREWEL), and 142 to 156 (WIAVAYSAPVAAATA). H118 is a chlorophyll a binding site. Position 126 (Y126) interacts with pheophytin a. 2 residues coordinate [CaMn4O5] cluster: D170 and E189. Residues 197-218 (FHMLGVAGVFGGSLFSAMHGSL) form a helical membrane-spanning segment. Residue H198 participates in chlorophyll a binding. A quinone contacts are provided by residues H215 and 264–265 (SF). Residue H215 coordinates Fe cation. Residue H272 participates in Fe cation binding. A helical membrane pass occupies residues 274 to 288 (FLAAWPVVGIWFTAL). Positions 332, 333, 342, and 344 each coordinate [CaMn4O5] cluster. The propeptide occupies 345 to 353 (AVEAPSING).

The protein belongs to the reaction center PufL/M/PsbA/D family. As to quaternary structure, PSII is composed of 1 copy each of membrane proteins PsbA, PsbB, PsbC, PsbD, PsbE, PsbF, PsbH, PsbI, PsbJ, PsbK, PsbL, PsbM, PsbT, PsbX, PsbY, PsbZ, Psb30/Ycf12, at least 3 peripheral proteins of the oxygen-evolving complex and a large number of cofactors. It forms dimeric complexes. The D1/D2 heterodimer binds P680, chlorophylls that are the primary electron donor of PSII, and subsequent electron acceptors. It shares a non-heme iron and each subunit binds pheophytin, quinone, additional chlorophylls, carotenoids and lipids. D1 provides most of the ligands for the Mn4-Ca-O5 cluster of the oxygen-evolving complex (OEC). There is also a Cl(-1) ion associated with D1 and D2, which is required for oxygen evolution. The PSII complex binds additional chlorophylls, carotenoids and specific lipids. is required as a cofactor. Tyr-161 forms a radical intermediate that is referred to as redox-active TyrZ, YZ or Y-Z. Post-translationally, C-terminally processed by CTPA; processing is essential to allow assembly of the oxygen-evolving complex and thus photosynthetic growth.

It localises to the plastid. The protein resides in the chloroplast thylakoid membrane. It carries out the reaction 2 a plastoquinone + 4 hnu + 2 H2O = 2 a plastoquinol + O2. Functionally, photosystem II (PSII) is a light-driven water:plastoquinone oxidoreductase that uses light energy to abstract electrons from H(2)O, generating O(2) and a proton gradient subsequently used for ATP formation. It consists of a core antenna complex that captures photons, and an electron transfer chain that converts photonic excitation into a charge separation. The D1/D2 (PsbA/PsbD) reaction center heterodimer binds P680, the primary electron donor of PSII as well as several subsequent electron acceptors. The polypeptide is Photosystem II protein D1 (Lotus japonicus (Lotus corniculatus var. japonicus)).